The sequence spans 180 residues: Ribosome maturation factor RimM (180 aa).

Positions 104 to 177 (PEEFHDHQLV…RVVVDPPGGL (74 aa)) constitute a PRC barrel domain.

This sequence belongs to the RimM family. Binds ribosomal protein uS19.

The protein resides in the cytoplasm. An accessory protein needed during the final step in the assembly of 30S ribosomal subunit, possibly for assembly of the head region. Essential for efficient processing of 16S rRNA. May be needed both before and after RbfA during the maturation of 16S rRNA. It has affinity for free ribosomal 30S subunits but not for 70S ribosomes. This chain is Ribosome maturation factor RimM, found in Salinispora tropica (strain ATCC BAA-916 / DSM 44818 / JCM 13857 / NBRC 105044 / CNB-440).